Consider the following 121-residue polypeptide: Small ribosomal subunit protein uS13 (121 aa).

Positions 97–121 are disordered; the sequence is VRGQRTRTNARTRRGARKTVAGKKK. Residues 100-121 show a composition bias toward basic residues; sequence QRTRTNARTRRGARKTVAGKKK.

Belongs to the universal ribosomal protein uS13 family. Part of the 30S ribosomal subunit. Forms a loose heterodimer with protein S19. Forms two bridges to the 50S subunit in the 70S ribosome.

Its function is as follows. Located at the top of the head of the 30S subunit, it contacts several helices of the 16S rRNA. In the 70S ribosome it contacts the 23S rRNA (bridge B1a) and protein L5 of the 50S subunit (bridge B1b), connecting the 2 subunits; these bridges are implicated in subunit movement. Contacts the tRNAs in the A and P-sites. The sequence is that of Small ribosomal subunit protein uS13 from Parasynechococcus marenigrum (strain WH8102).